A 260-amino-acid chain; its full sequence is 1-(5-phosphoribosyl)-5-[(5-phosphoribosylamino)methylideneamino] imidazole-4-carboxamide isomerase (260 aa).

Catalysis depends on Asp8, which acts as the Proton acceptor. The active-site Proton donor is the Asp130.

This sequence belongs to the HisA/HisF family.

The protein localises to the cytoplasm. The enzyme catalyses 1-(5-phospho-beta-D-ribosyl)-5-[(5-phospho-beta-D-ribosylamino)methylideneamino]imidazole-4-carboxamide = 5-[(5-phospho-1-deoxy-D-ribulos-1-ylimino)methylamino]-1-(5-phospho-beta-D-ribosyl)imidazole-4-carboxamide. The protein operates within amino-acid biosynthesis; L-histidine biosynthesis; L-histidine from 5-phospho-alpha-D-ribose 1-diphosphate: step 4/9. This is 1-(5-phosphoribosyl)-5-[(5-phosphoribosylamino)methylideneamino] imidazole-4-carboxamide isomerase from Chlorobaculum parvum (strain DSM 263 / NCIMB 8327) (Chlorobium vibrioforme subsp. thiosulfatophilum).